Consider the following 176-residue polypeptide: Late lactation protein (176 aa).

The first 18 residues, 1 to 18 (MKVLFFTIALSLFSILHA), serve as a signal peptide directing secretion. A disulfide bridge connects residues cysteine 78 and cysteine 171.

The protein belongs to the calycin superfamily. Lipocalin family. Mammary gland. Secreted in milk.

The protein resides in the secreted. In terms of biological role, probably serves a role in the transport of a small ligand released during the hydrolysis of milk fat. The polypeptide is Late lactation protein (Trichosurus vulpecula (Brush-tailed possum)).